The primary structure comprises 218 residues: Antifreeze protein Maxi (218 aa).

Residues 1–23 (MALSLFTVGQFIFLFWTISITEA) form the signal peptide.

The protein belongs to the type-I AFP family. Homodimer. Detected in blood serum (at protein level). Detected in liver.

Its subcellular location is the secreted. Contributes to protect fish blood from freezing at subzero sea water temperatures. Lowers the blood freezing point by about 1.1 degrees at a concentration of 0.1 mg/ml, and by about 1.5 degrees at a concentration of 0.2 mg/ml. Binds to nascent ice crystals and prevents further growth. In Pseudopleuronectes americanus (Winter flounder), this protein is Antifreeze protein Maxi.